The primary structure comprises 833 residues: Interleukin enhancer-binding factor 3 homolog (833 aa).

The DZF domain maps to 11–379 (RIFVNDDRHV…PMKRPIEEES (369 aa)). Disordered regions lie at residues 65-86 (VNAL…GEQA) and 339-403 (DPLP…KAEP). The residue at position 70 (Thr-70) is a Phosphothreonine. Residues 373–385 (RPIEEESTDEKNP) show a composition bias toward basic and acidic residues. 2 consecutive DRBM domains span residues 402–471 (EPAQ…DMGL) and 527–593 (HGKN…KLFP). 3 disordered regions span residues 597–651 (NSEV…FNQG), 702–762 (QSDS…GGGA), and 775–833 (AYPS…YQYR). Positions 629-639 (GRGRGRGRGRG) are enriched in basic residues. Gly residues predominate over residues 640–651 (RGFNNGGGFNQG). Residues 775–818 (AYPSQVTGGQEYNYEGYSNQSNYNSQGGANQNFGGNSAPYNSGQ) show a composition bias toward polar residues.

Its subcellular location is the nucleus. It is found in the nucleolus. The protein resides in the cytoplasm. In terms of biological role, RNA-binding protein that plays an essential role in the biogenesis of circular RNAs (circRNAs) which are produced by back-splicing circularization of pre-mRNAs. Within the nucleus, promotes circRNAs processing by stabilizing the regulatory elements residing in the flanking introns of the circularized exons. Plays thereby a role in the back-splicing of a subset of circRNAs. As a consequence, participates in a wide range of transcriptional and post-transcriptional processes. Binds to poly-U elements and AU-rich elements (AREs) in the 3'-UTR of target mRNAs. Upon viral infection, ILF3 accumulates in the cytoplasm and participates in the innate antiviral response. Mechanistically, ILF3 becomes phosphorylated and activated by the double-stranded RNA-activated protein kinase/PKR which releases ILF3 from cellular mature circRNAs. In turn, unbound ILF3 molecules are able to interact with and thus inhibit viral mRNAs. This chain is Interleukin enhancer-binding factor 3 homolog (ilf3), found in Danio rerio (Zebrafish).